Consider the following 175-residue polypeptide: Large ribosomal subunit protein bL17 (175 aa).

Residues 127 to 175 (GEAEAATKRAVKEDALKKDEAPAAESVEDAKPAEDAPAAEAADDKGKDA) form a disordered region. Over residues 131-147 (AATKRAVKEDALKKDEA) the composition is skewed to basic and acidic residues.

The protein belongs to the bacterial ribosomal protein bL17 family. In terms of assembly, part of the 50S ribosomal subunit. Contacts protein L32.

This is Large ribosomal subunit protein bL17 from Streptomyces griseus subsp. griseus (strain JCM 4626 / CBS 651.72 / NBRC 13350 / KCC S-0626 / ISP 5235).